The chain runs to 452 residues: Probable 1,4-beta-D-glucan cellobiohydrolase A (452 aa).

The first 17 residues, 1–17 (MHQRALLFSALLTAVRA), serve as a signal peptide directing secretion. Residue Asn-62 is glycosylated (N-linked (GlcNAc...) asparagine). Residue Glu-227 is the Nucleophile of the active site. Catalysis depends on Glu-232, which acts as the Proton donor. N-linked (GlcNAc...) asparagine glycosylation is found at Asn-285, Asn-335, Asn-402, and Asn-445.

It belongs to the glycosyl hydrolase 7 (cellulase C) family.

It localises to the secreted. It carries out the reaction Hydrolysis of (1-&gt;4)-beta-D-glucosidic linkages in cellulose and cellotetraose, releasing cellobiose from the non-reducing ends of the chains.. Functionally, the biological conversion of cellulose to glucose generally requires three types of hydrolytic enzymes: (1) Endoglucanases which cut internal beta-1,4-glucosidic bonds; (2) Exocellobiohydrolases that cut the disaccharide cellobiose from the non-reducing end of the cellulose polymer chain; (3) Beta-1,4-glucosidases which hydrolyze the cellobiose and other short cello-oligosaccharides to glucose. In Aspergillus niger (strain ATCC MYA-4892 / CBS 513.88 / FGSC A1513), this protein is Probable 1,4-beta-D-glucan cellobiohydrolase A (cbhA).